Here is a 430-residue protein sequence, read N- to C-terminus: Dihydrolipoyllysine-residue acetyltransferase component of pyruvate dehydrogenase complex (430 aa).

In terms of domain architecture, Lipoyl-binding spans 2 to 77; the sequence is AFEFRLPDIG…VVGDVIVKID (76 aa). Residue lysine 43 is modified to N6-lipoyllysine. The interval 80-122 is disordered; that stretch reads DAEDMQFKGHDDDSSSKEEPAKEEAPAEQAPVATQTEEVDENR. Residues 84 to 104 are compositionally biased toward basic and acidic residues; sequence MQFKGHDDDSSSKEEPAKEEA. Positions 125–162 constitute a Peripheral subunit-binding (PSBD) domain; sequence KAMPSVRKYAREKGVNIKAVSGSGKNGRITKEDVDAYL. Positions 165–200 are disordered; it reads GAPTASNESAASATSEEVAETPAAPAAVTLEGDFPE. Residues 166–193 are compositionally biased toward low complexity; sequence APTASNESAASATSEEVAETPAAPAAVT. The active site involves histidine 401.

The protein belongs to the 2-oxoacid dehydrogenase family. Forms a 24-polypeptide structural core with octahedral symmetry. (R)-lipoate is required as a cofactor.

The catalysed reaction is N(6)-[(R)-dihydrolipoyl]-L-lysyl-[protein] + acetyl-CoA = N(6)-[(R)-S(8)-acetyldihydrolipoyl]-L-lysyl-[protein] + CoA. Functionally, the pyruvate dehydrogenase complex catalyzes the overall conversion of pyruvate to acetyl-CoA and CO(2). It contains multiple copies of three enzymatic components: pyruvate dehydrogenase (E1), dihydrolipoamide acetyltransferase (E2) and lipoamide dehydrogenase (E3). The chain is Dihydrolipoyllysine-residue acetyltransferase component of pyruvate dehydrogenase complex (pdhC) from Staphylococcus aureus (strain COL).